The following is a 364-amino-acid chain: 3-dehydroquinate synthase (364 aa).

Residues 71-76 (DGEQYK), 105-109 (GVIGD), 129-130 (TT), lysine 142, lysine 151, and 169-172 (CLKT) contribute to the NAD(+) site. Glutamate 184, histidine 247, and histidine 264 together coordinate Zn(2+).

This sequence belongs to the sugar phosphate cyclases superfamily. Dehydroquinate synthase family. Co(2+) serves as cofactor. It depends on Zn(2+) as a cofactor. The cofactor is NAD(+).

The protein resides in the cytoplasm. It carries out the reaction 7-phospho-2-dehydro-3-deoxy-D-arabino-heptonate = 3-dehydroquinate + phosphate. It participates in metabolic intermediate biosynthesis; chorismate biosynthesis; chorismate from D-erythrose 4-phosphate and phosphoenolpyruvate: step 2/7. Functionally, catalyzes the conversion of 3-deoxy-D-arabino-heptulosonate 7-phosphate (DAHP) to dehydroquinate (DHQ). This chain is 3-dehydroquinate synthase, found in Klebsiella pneumoniae (strain 342).